Consider the following 175-residue polypeptide: Ribosome maturation factor RimM (175 aa).

Positions 96-175 constitute a PRC barrel domain; that stretch reads EGDYYWHDLI…TIEVDWDAGF (80 aa).

The protein belongs to the RimM family. As to quaternary structure, binds ribosomal protein uS19.

It is found in the cytoplasm. Its function is as follows. An accessory protein needed during the final step in the assembly of 30S ribosomal subunit, possibly for assembly of the head region. Essential for efficient processing of 16S rRNA. May be needed both before and after RbfA during the maturation of 16S rRNA. It has affinity for free ribosomal 30S subunits but not for 70S ribosomes. This chain is Ribosome maturation factor RimM, found in Haemophilus influenzae (strain PittEE).